A 670-amino-acid chain; its full sequence is Solute carrier organic anion transporter family member 1A5 (670 aa).

The Cytoplasmic segment spans residues 1–20; sequence MGETEKRVATHEVRCFSKIK. A helical transmembrane segment spans residues 21–40; the sequence is MFLLALTWAYVSKSLSGIYM. Topologically, residues 41–59 are extracellular; that stretch reads NTMLTQIERQFDIPTSIVG. Residues 60–80 traverse the membrane as a helical segment; sequence FINGSFEIGNLLLIIFVSYFG. The Cytoplasmic segment spans residues 81–86; sequence TKLHRP. Residues 87–111 traverse the membrane as a helical segment; sequence IMIGVGCVIMGLGCFLMSLPHFLMG. The Extracellular segment spans residues 112–155; sequence RYEYETTISPTSNLSSNSFLCMENRSQTLKPTQDPAECIKEMKS. Asparagine 124 and asparagine 135 each carry an N-linked (GlcNAc...) asparagine glycan. A helical membrane pass occupies residues 156–184; sequence LMWIYVLVGNIIRGIGETPIMPLGISYIE. At 185 to 203 the chain is on the cytoplasmic side; sequence DFAKSENSPLYIGILETGK. A helical membrane pass occupies residues 204–224; sequence VFGPIVGLLLGSFCASIYVDT. Residues 225–242 are Extracellular-facing; it reads GSVNTDDLTITPTDTRWV. A helical membrane pass occupies residues 243-267; sequence GAWWIGFLICAGVNILSSIPFFFFP. Residues 268–311 are Cytoplasmic-facing; the sequence is KTLPKEGLQDDVDGTNNDKEEKHREKAKEENRGITKDFLPFMKS. The helical transmembrane segment at 312-333 threads the bilayer; sequence LSCNPIYMLLILTSVLQINAFI. The Extracellular segment spans residues 334–353; that stretch reads NMFTFLPKYLEQQYGKSTAE. A helical transmembrane segment spans residues 354 to 377; the sequence is VVLLIGVYNLPPICIGYLLIGFIM. Residues 378–381 are Cytoplasmic-facing; it reads KKFK. A helical membrane pass occupies residues 382–405; it reads ITVKKAAYMAFCLSLFEYLLYFLH. The Extracellular portion of the chain corresponds to 406-513; that stretch reads FMITCDNFPV…PECANKLQYF (108 aa). One can recognise a Kazal-like domain in the interval 433 to 488; the sequence is NKVLADCNRGCSCSTNSWDPVCGDNGLAYMSACLAGCKKSVGTGTNMVFQNCSCIR. Disulfide bonds link cysteine 439/cysteine 469, cysteine 445/cysteine 465, and cysteine 454/cysteine 486. N-linked (GlcNAc...) asparagine glycans are attached at residues asparagine 483 and asparagine 492. The helical transmembrane segment at 514–536 threads the bilayer; that stretch reads LIMSVIGSFIYSITAIPGYMVLL. Topologically, residues 537–545 are cytoplasmic; that stretch reads RCIKPEEKS. A helical membrane pass occupies residues 546–571; that stretch reads LGIGLHAFCTRVFAGIPAPIYFGALI. Residues 572 to 605 lie on the Extracellular side of the membrane; the sequence is DRTCLHWGTLKCGEPGACRMYNINNFRRIYLVLP. The helical transmembrane segment at 606–623 threads the bilayer; sequence AALRGSSYLPALFILILM. Topologically, residues 624–670 are cytoplasmic; the sequence is RKFQFPGEIDSSETELAEMKITVKKSECTDVHGSPQVENDGELKTRL.

It belongs to the organo anion transporter (TC 2.A.60) family. Highly expressed in the kidney, moderately abundant in the retina, and even lower in the liver. Expressed (at protein level) in the small intestine. Expressed at lower levels in brain,lung, and retina.

It localises to the cell membrane. The protein resides in the basal cell membrane. The catalysed reaction is taurocholate(out) = taurocholate(in). It carries out the reaction glycocholate(out) = glycocholate(in). It catalyses the reaction taurochenodeoxycholate(out) = taurochenodeoxycholate(in). The enzyme catalyses tauroursodeoxycholate(out) = tauroursodeoxycholate(in). The catalysed reaction is 3,3',5'-triiodo-L-thyronine(out) = 3,3',5'-triiodo-L-thyronine(in). It carries out the reaction L-thyroxine(out) = L-thyroxine(in). It catalyses the reaction taurodeoxycholate(out) = taurodeoxycholate(in). The enzyme catalyses glycodeoxycholate(out) = glycodeoxycholate(in). The catalysed reaction is glycochenodeoxycholate(out) = glycochenodeoxycholate(in). It carries out the reaction glycoursodeoxycholate(out) = glycoursodeoxycholate(in). It catalyses the reaction estrone 3-sulfate(out) = estrone 3-sulfate(in). The enzyme catalyses prostaglandin E2(out) = prostaglandin E2(in). The catalysed reaction is substance P(out) = substance P(in). Na(+)-independent transporter that mediates the cellular uptake of a broad range of organic anions such as the endogenous bile salts cholate and deoxycholate, either in their unconjugated or conjugated forms (taurocholate and glycocholate), estrone 3-sulfate and prostaglandin E2, at the plasma membrane. Responsible for intestinal absorption of bile acids. Capable of thyroid hormone transport (both T3 or 3,3',5'-triiodo-L-thyronine, and T4 or L-tyroxine). Plays roles in blood-brain and -cerebrospinal fluid barrier transport of organic anions and signal mediators, and in hormone uptake by neural cells. May also play a role in the reuptake of neuropeptides such as substance P/TAC1 and vasoactive intestinal peptide/VIP released from retinal neurons. Shows a pH-sensitive substrate specificity which may be ascribed to the protonation state of the binding site and leads to a stimulation of substrate transport in an acidic microenvironment. Hydrogencarbonate/HCO3(-) acts as the probable counteranion that exchanges for organic anions. May contribute to regulate the transport of organic compounds in testis across the blood-testis-barrier. The chain is Solute carrier organic anion transporter family member 1A5 (Slco1a5) from Rattus norvegicus (Rat).